The primary structure comprises 116 residues: Vesicle-associated membrane protein 2 (116 aa).

The disordered stretch occupies residues 1-33 (MSATAATAPPAAPAGEGGPPAPPPNLTSNRRLQ). Serine 2 carries the post-translational modification N-acetylserine. At 2-94 (SATAATAPPA…KRKYWWKNLK (93 aa)) the chain is on the cytoplasmic side. A v-SNARE coiled-coil homology domain is found at 31 to 91 (RLQQTQAQVD…AKLKRKYWWK (61 aa)). Residues 92 to 116 (NLKMMIILGVICAIILIIIIVYFSS) are required for interaction with SEPT8. The chain crosses the membrane as a helical; Anchor for type IV membrane protein span at residues 95-114 (MMIILGVICAIILIIIIVYF). Topologically, residues 115–116 (SS) are vesicular.

Belongs to the synaptobrevin family. As to quaternary structure, part of the SNARE core complex containing SNAP25, VAMP2 and STX1A; this complex constitutes the basic catalytic machinery of the complex neurotransmitter release apparatus. Recruited to the SNARE complex following binding of the SNARE complex component STX1A to STXBP1. This complex binds to CPLX1. Interacts with POPDC1 and STX4. Interacts with VAPA and VAPB. Interacts with WDFY2, PRKCZ and PRKCI. Forms a complex with WDFY2 and PRKCZ. Interacts (via N-terminus) with KCNB1 (via N-terminus and C-terminus); stimulates the channel inactivation rate of KCNB1. Interacts with SEPT8; the interaction inhibits interaction of VAMP2 with SYP. Interacts with SYP; the interaction is inhibited by interaction with SEPT8. Interacts with PICALM. Interacts with alpha-synuclein/SNCA. Interacts with STX3. In terms of processing, phosphorylated by PRKCZ in vitro and this phosphorylation is increased in the presence of WDFY2.

It is found in the cytoplasmic vesicle. Its subcellular location is the secretory vesicle. The protein localises to the synaptic vesicle membrane. It localises to the cell membrane. Functionally, involved in the targeting and/or fusion of transport vesicles to their target membrane. Major SNARE protein of synaptic vesicles which mediates fusion of synaptic vesicles to release neurotransmitters. Essential for fast vesicular exocytosis and activity-dependent neurotransmitter release as well as fast endocytosis that mediates rapid reuse of synaptic vesicles. Modulates the gating characteristics of the delayed rectifier voltage-dependent potassium channel KCNB1. The sequence is that of Vesicle-associated membrane protein 2 (VAMP2) from Bos taurus (Bovine).